Reading from the N-terminus, the 121-residue chain is DNA-directed RNA polymerase subunit omega (121 aa).

The disordered stretch occupies residues 95–121 (DGDAANDLQGEEDDLGLGLDEAEDLGF). The segment covering 103–121 (QGEEDDLGLGLDEAEDLGF) has biased composition (acidic residues).

The protein belongs to the RNA polymerase subunit omega family. In terms of assembly, the RNAP catalytic core consists of 2 alpha, 1 beta, 1 beta' and 1 omega subunit. When a sigma factor is associated with the core the holoenzyme is formed, which can initiate transcription.

The catalysed reaction is RNA(n) + a ribonucleoside 5'-triphosphate = RNA(n+1) + diphosphate. Its function is as follows. Promotes RNA polymerase assembly. Latches the N- and C-terminal regions of the beta' subunit thereby facilitating its interaction with the beta and alpha subunits. In Magnetococcus marinus (strain ATCC BAA-1437 / JCM 17883 / MC-1), this protein is DNA-directed RNA polymerase subunit omega.